Consider the following 502-residue polypeptide: Aspartyl/glutamyl-tRNA(Asn/Gln) amidotransferase subunit B (502 aa).

It belongs to the GatB/GatE family. GatB subfamily. Heterotrimer of A, B and C subunits.

The enzyme catalyses L-glutamyl-tRNA(Gln) + L-glutamine + ATP + H2O = L-glutaminyl-tRNA(Gln) + L-glutamate + ADP + phosphate + H(+). The catalysed reaction is L-aspartyl-tRNA(Asn) + L-glutamine + ATP + H2O = L-asparaginyl-tRNA(Asn) + L-glutamate + ADP + phosphate + 2 H(+). Functionally, allows the formation of correctly charged Asn-tRNA(Asn) or Gln-tRNA(Gln) through the transamidation of misacylated Asp-tRNA(Asn) or Glu-tRNA(Gln) in organisms which lack either or both of asparaginyl-tRNA or glutaminyl-tRNA synthetases. The reaction takes place in the presence of glutamine and ATP through an activated phospho-Asp-tRNA(Asn) or phospho-Glu-tRNA(Gln). The polypeptide is Aspartyl/glutamyl-tRNA(Asn/Gln) amidotransferase subunit B (Arthrobacter sp. (strain FB24)).